The chain runs to 422 residues: Serine hydroxymethyltransferase (422 aa).

Residues leucine 121 and 125-127 each bind (6S)-5,6,7,8-tetrahydrofolate; that span reads GHL. Lysine 230 carries the post-translational modification N6-(pyridoxal phosphate)lysine. 355–357 serves as a coordination point for (6S)-5,6,7,8-tetrahydrofolate; the sequence is SPF.

The protein belongs to the SHMT family. In terms of assembly, homodimer. Requires pyridoxal 5'-phosphate as cofactor.

It is found in the cytoplasm. The enzyme catalyses (6R)-5,10-methylene-5,6,7,8-tetrahydrofolate + glycine + H2O = (6S)-5,6,7,8-tetrahydrofolate + L-serine. The protein operates within one-carbon metabolism; tetrahydrofolate interconversion. Its pathway is amino-acid biosynthesis; glycine biosynthesis; glycine from L-serine: step 1/1. Catalyzes the reversible interconversion of serine and glycine with tetrahydrofolate (THF) serving as the one-carbon carrier. This reaction serves as the major source of one-carbon groups required for the biosynthesis of purines, thymidylate, methionine, and other important biomolecules. Also exhibits THF-independent aldolase activity toward beta-hydroxyamino acids, producing glycine and aldehydes, via a retro-aldol mechanism. In Teredinibacter turnerae (strain ATCC 39867 / T7901), this protein is Serine hydroxymethyltransferase.